A 660-amino-acid chain; its full sequence is Bifunctional polymyxin resistance protein ArnA (660 aa).

The interval 1–304 (MKAVIFAYHD…TLGLVAGARL (304 aa)) is formyltransferase ArnAFT. The Proton donor; for formyltransferase activity role is filled by His104. Residues Arg114 and 136–140 (VKRAD) contribute to the (6R)-10-formyltetrahydrofolate site. Residues 314–660 (RRIRVLILGV…RSVDIAERAS (347 aa)) are dehydrogenase ArnADH. NAD(+) is bound by residues Asp347 and 368–369 (DI). UDP-alpha-D-glucuronate contacts are provided by residues Ala393, Tyr398, and 432–433 (TS). Glu434 (proton acceptor; for decarboxylase activity) is an active-site residue. UDP-alpha-D-glucuronate is bound by residues Arg460, Asn492, 526-535 (KLIDGGQQKR), and Tyr613. Residue Arg619 is the Proton donor; for decarboxylase activity of the active site.

In the N-terminal section; belongs to the Fmt family. UDP-L-Ara4N formyltransferase subfamily. This sequence in the C-terminal section; belongs to the NAD(P)-dependent epimerase/dehydratase family. UDP-glucuronic acid decarboxylase subfamily. As to quaternary structure, homohexamer, formed by a dimer of trimers.

It carries out the reaction UDP-alpha-D-glucuronate + NAD(+) = UDP-beta-L-threo-pentopyranos-4-ulose + CO2 + NADH. It catalyses the reaction UDP-4-amino-4-deoxy-beta-L-arabinose + (6R)-10-formyltetrahydrofolate = UDP-4-deoxy-4-formamido-beta-L-arabinose + (6S)-5,6,7,8-tetrahydrofolate + H(+). The protein operates within nucleotide-sugar biosynthesis; UDP-4-deoxy-4-formamido-beta-L-arabinose biosynthesis; UDP-4-deoxy-4-formamido-beta-L-arabinose from UDP-alpha-D-glucuronate: step 1/3. It participates in nucleotide-sugar biosynthesis; UDP-4-deoxy-4-formamido-beta-L-arabinose biosynthesis; UDP-4-deoxy-4-formamido-beta-L-arabinose from UDP-alpha-D-glucuronate: step 3/3. Its pathway is bacterial outer membrane biogenesis; lipopolysaccharide biosynthesis. Its function is as follows. Bifunctional enzyme that catalyzes the oxidative decarboxylation of UDP-glucuronic acid (UDP-GlcUA) to UDP-4-keto-arabinose (UDP-Ara4O) and the addition of a formyl group to UDP-4-amino-4-deoxy-L-arabinose (UDP-L-Ara4N) to form UDP-L-4-formamido-arabinose (UDP-L-Ara4FN). The modified arabinose is attached to lipid A and is required for resistance to polymyxin and cationic antimicrobial peptides. The chain is Bifunctional polymyxin resistance protein ArnA from Salmonella schwarzengrund (strain CVM19633).